The chain runs to 443 residues: Tubulin beta chain (443 aa).

GTP contacts are provided by glutamine 11, glutamate 69, serine 138, glycine 142, threonine 143, glycine 144, asparagine 204, and asparagine 226. Residue glutamate 69 participates in Mg(2+) binding.

The protein belongs to the tubulin family. In terms of assembly, dimer of alpha and beta chains. A typical microtubule is a hollow water-filled tube with an outer diameter of 25 nm and an inner diameter of 15 nM. Alpha-beta heterodimers associate head-to-tail to form protofilaments running lengthwise along the microtubule wall with the beta-tubulin subunit facing the microtubule plus end conferring a structural polarity. Microtubules usually have 13 protofilaments but different protofilament numbers can be found in some organisms and specialized cells. Requires Mg(2+) as cofactor.

Its subcellular location is the cytoplasm. It localises to the cytoskeleton. Tubulin is the major constituent of microtubules, a cylinder consisting of laterally associated linear protofilaments composed of alpha- and beta-tubulin heterodimers. Microtubules grow by the addition of GTP-tubulin dimers to the microtubule end, where a stabilizing cap forms. Below the cap, tubulin dimers are in GDP-bound state, owing to GTPase activity of alpha-tubulin. The polypeptide is Tubulin beta chain (Thalassiosira weissflogii (Marine diatom)).